The primary structure comprises 334 residues: 3-ketodihydrosphingosine reductase (334 aa).

The first 20 residues, 1–20 (MIIYILFSLLAAVIVHLVYK), serve as a signal peptide directing secretion. G36, S38, S39, G40, R62, K66, D100, and I101 together coordinate NADPH. Positions 36-40 (GGSSG) match the GXSXG motif. Residue S182 is the Proton donor of the active site. The active-site Proton acceptor is Y196. Residues Y196 and K200 each contribute to the NADP(+) site. The Lowers pKa of active site Tyr role is filled by K200.

It belongs to the short-chain dehydrogenases/reductases (SDR) family.

The protein localises to the endoplasmic reticulum. The catalysed reaction is sphinganine + NADP(+) = 3-oxosphinganine + NADPH + H(+). It functions in the pathway lipid metabolism; sphingolipid metabolism. Its function is as follows. Catalyzes the reduction of 3'-oxosphinganine (3-ketodihydrosphingosine/KDS) to sphinganine (dihydrosphingosine/DHS), the second step of de novo sphingolipid biosynthesis. The chain is 3-ketodihydrosphingosine reductase (ksrA-1) from Dictyostelium discoideum (Social amoeba).